Reading from the N-terminus, the 983-residue chain is Isoleucine--tRNA ligase (983 aa).

Residues 61-71 carry the 'HIGH' region motif; that stretch reads PYANGELHVGH. Glu608 lines the L-isoleucyl-5'-AMP pocket. Residues 649 to 653 carry the 'KMSKS' region motif; the sequence is KMSKS. Lys652 is a binding site for ATP. Residues Cys952, Cys955, Cys972, and Cys975 each contribute to the Zn(2+) site.

This sequence belongs to the class-I aminoacyl-tRNA synthetase family. IleS type 1 subfamily. In terms of assembly, monomer. It depends on Zn(2+) as a cofactor.

It is found in the cytoplasm. The enzyme catalyses tRNA(Ile) + L-isoleucine + ATP = L-isoleucyl-tRNA(Ile) + AMP + diphosphate. Catalyzes the attachment of isoleucine to tRNA(Ile). As IleRS can inadvertently accommodate and process structurally similar amino acids such as valine, to avoid such errors it has two additional distinct tRNA(Ile)-dependent editing activities. One activity is designated as 'pretransfer' editing and involves the hydrolysis of activated Val-AMP. The other activity is designated 'posttransfer' editing and involves deacylation of mischarged Val-tRNA(Ile). This chain is Isoleucine--tRNA ligase, found in Gloeobacter violaceus (strain ATCC 29082 / PCC 7421).